A 293-amino-acid polypeptide reads, in one-letter code: N-acetylneuraminate lyase (293 aa).

Residues Ser48 and Ser49 each contribute to the aceneuramate site. Tyr137 acts as the Proton donor in catalysis. Lys165 acts as the Schiff-base intermediate with substrate in catalysis. Residues Thr167, Gly189, Asp191, Glu192, and Ser208 each contribute to the aceneuramate site.

The protein belongs to the DapA family. NanA subfamily. Homotetramer.

Its subcellular location is the cytoplasm. It carries out the reaction aceneuramate = aldehydo-N-acetyl-D-mannosamine + pyruvate. It participates in amino-sugar metabolism; N-acetylneuraminate degradation; D-fructose 6-phosphate from N-acetylneuraminate: step 1/5. Its function is as follows. Catalyzes the reversible aldol cleavage of N-acetylneuraminic acid (sialic acid; Neu5Ac) to form pyruvate and N-acetylmannosamine (ManNAc) via a Schiff base intermediate. The protein is N-acetylneuraminate lyase of Staphylococcus aureus (strain Mu3 / ATCC 700698).